An 88-amino-acid polypeptide reads, in one-letter code: Small ribosomal subunit protein uS17 (88 aa).

Belongs to the universal ribosomal protein uS17 family. As to quaternary structure, part of the 30S ribosomal subunit.

Its function is as follows. One of the primary rRNA binding proteins, it binds specifically to the 5'-end of 16S ribosomal RNA. This Prochlorococcus marinus (strain MIT 9303) protein is Small ribosomal subunit protein uS17.